We begin with the raw amino-acid sequence, 161 residues long: Nucleotide-binding protein lpl1175 (161 aa).

Belongs to the YajQ family.

Its function is as follows. Nucleotide-binding protein. In Legionella pneumophila (strain Lens), this protein is Nucleotide-binding protein lpl1175.